We begin with the raw amino-acid sequence, 405 residues long: Exodeoxyribonuclease 7 large subunit (405 aa).

It belongs to the XseA family. In terms of assembly, heterooligomer composed of large and small subunits.

The protein localises to the cytoplasm. It catalyses the reaction Exonucleolytic cleavage in either 5'- to 3'- or 3'- to 5'-direction to yield nucleoside 5'-phosphates.. Functionally, bidirectionally degrades single-stranded DNA into large acid-insoluble oligonucleotides, which are then degraded further into small acid-soluble oligonucleotides. This is Exodeoxyribonuclease 7 large subunit from Halothermothrix orenii (strain H 168 / OCM 544 / DSM 9562).